Consider the following 189-residue polypeptide: EIEFTRTMHGIMRNISHFCSRTKSRTWGKDGWQKIVVCVIADGRQNVHPRTLNALAAMGVYQDGIAKNEVNSKEVTAHVYEYTTQVSLDETLKFKGAEKGTVPCQDVFCLKEKNKKKLNSHRWFFNAFGRALTPNVCILLDVGTKPDSKALYHLWKAFDQDSNVAGAAGEIKADKGKGWMGLLNPLVAS.

It belongs to the chitin synthase family. Class II subfamily.

The protein localises to the cell membrane. The enzyme catalyses [(1-&gt;4)-N-acetyl-beta-D-glucosaminyl](n) + UDP-N-acetyl-alpha-D-glucosamine = [(1-&gt;4)-N-acetyl-beta-D-glucosaminyl](n+1) + UDP + H(+). Functionally, polymerizes chitin, a structural polymer of the cell wall and septum, by transferring the sugar moiety of UDP-GlcNAc to the non-reducing end of the growing chitin polymer. The sequence is that of Chitin synthase 2 (CHS2) from Xylohypha bantiana.